Reading from the N-terminus, the 49-residue chain is Large ribosomal subunit protein bL33B (49 aa).

The protein belongs to the bacterial ribosomal protein bL33 family.

This is Large ribosomal subunit protein bL33B from Limosilactobacillus reuteri subsp. reuteri (strain JCM 1112) (Lactobacillus reuteri).